The chain runs to 321 residues: Acyl-CoA 5-desaturase AL21 (321 aa).

2 helical membrane-spanning segments follow: residues 42–62 (IFHIILVGGLHVLCLSAPFTF) and 64–84 (WSAFWLSLTLYAVCGVFGTTL). 5 residues coordinate Fe cation: H87, H92, H124, H127, and H128. Positions 87 to 92 (HRNLTH) match the Histidine box-1 motif. Residues 124-128 (HRYHH) carry the Histidine box-2 motif. The helical transmembrane segment at 190–210 (LQAALLYMFGGFPFIVWGMAV) threads the bilayer. Residues H227, H256, H259, and H260 each coordinate Fe cation. Positions 256–260 (HNNHH) match the Histidine box-3 motif.

Belongs to the fatty acid desaturase type 1 family. Fe(2+) is required as a cofactor.

It localises to the membrane. The catalysed reaction is (11Z,14Z)-eicosadienoyl-CoA + AH2 + O2 = (5Z,11Z,14Z)-eicosatrienoyl-CoA + A + 2 H2O. The enzyme catalyses (11Z,14Z,17Z)-eicosatrienoyl-CoA + AH2 + O2 = (5Z,11Z,14Z,17Z)-eicosatetraenoyl-CoA + A + 2 H2O. Its pathway is lipid metabolism; polyunsaturated fatty acid biosynthesis. Catalyzes the desaturation of 20:2Delta(11,14) and 20:3Delta(11,14,17) to generate sciadonic acid (20:3Delta(5,11,14)) and juniperonic acid (20:4Delta(5,11,14,17)). The enzyme can also use 16:0 and 18:0 as substrates. The protein is Acyl-CoA 5-desaturase AL21 of Anemone leveillei (Windflower).